The primary structure comprises 1322 residues: MRAKRGAVGKVMMSGSRHNKLAESSRVPPLAREYISAMATDRELDRFMALSSTASSGASGSTHSCALGSVPPPGCASMEHESRPESGHRRRTKSSDHRSPDERGEAKEQLRELSVSPPPSKHKISQFTSPKSEVTKTKPNEYTIIPIVLASSPSFRSVAVTQTMSQSAEDIRTPTKSPQMQNKKTQTPESVLKSHKRLEWDPSADVGYCKRAMSMSNISTLERSVLEDCSWRQPTQQRPEANLDGVQPLLAEEPSPMLDKPTPPLACSTFVNRSERTKSLNSGMESSLSSNKGDPRKKCQRKSRRQDSEVSSCQTDCRSSSQKESTQGSSEAKDIRGNFTTEGTQCSYNRNDTEIDSIMEEEESIDRRKKDDLRISSRVQDPQISSRRPSVSSSRRESLSSYRRDDSRLNSPNSSRLGSEVSSRVESSRSSSRRESQTNSVYGSLSASSFDYHMHMAQEVEVLKHNQRRQQEMEVEPKKQLEKEQHQNDMQQGEPKGRELKDKNHHSGREQQEIQPLMRDQRKAEQRHEKDHQLEREQQGIQQLSKGQRKAKKREKEREQERQYTAAQFEKIRSNRRHVNKENQKPENPVVNPSTGVTASTSTTSLDVGSGSRPGGELDLGIDLLCSLVKSRSLSQGQKKKLVRDIARRISCLELTESSTSSRSLSSSSKEQLKVPTGSLQQVAATNTNQSNARSSSKAERIAPPVPAPRKRAAIGSSSPLPESVSYSGSTSGSGEVITQKTNIPNRNASTDADIEPLDLQDWLNPMTLSEIEFEERLKGGTDSERRRQLHWVKTEINRMQEFKNLLENISLPSKSQKKANTESATAAQIPSSMRCMGDQKERPDKEYLLRQEMSAEAESKEMENSETTTTPPPPVRIESVGVNVTNSDPSTLPAPPPTQPPPPPPHLNQRNLQNRKKMATPLLVSGSSTSGGGRSESVCSFVQQRQRQFREHYQNQQQQQFVLLQQQKLYQLQKQLNQQKDILIQRQQHCGQCAQCGHQRTCIHQQNCPRRQQEAEEQPDEREQYMQMQYAQAAGSAYATPHQSGSSGADKNEAIYYQVVNSQGVASYVQATMVSTETQNEASATGGAGGSAITRSTTTTTNSSSSMMCISSDMSVPMGMMNTCETTTTTTTHQYDDVACQRVRRGHKETTMNAESMQRQTLQVRPRAISYVIQFTPTGSSEVIEKPPSLQDQLQLARPEFCANAKQRKAILNEMQMIRNARRQELDNVLSQSTSMEALNRHLEQLPPPANTRVRLFTTREMKAITSKRCKNLPEVLAAQSRQEEEQRRRSNRLMRDVFNKRLKSRVASGQISLNHSMAIM.

Disordered stretches follow at residues 1 to 26 (MRAK…ESSR), 53 to 135 (TASS…SEVT), 165 to 193 (SQSA…SVLK), 252 to 442 (EEPS…NSVY), 464 to 614 (KHNQ…GSRP), 657 to 752 (ESST…ASTD), 814 to 844 (SKSQ…KERP), 856 to 911 (AEAE…LNQR), and 1083 to 1109 (ASAT…SSMM). A compositionally biased stretch (low complexity) spans 53–62 (TASSGASGST). The segment covering 78–111 (MEHESRPESGHRRRTKSSDHRSPDERGEAKEQLR) has biased composition (basic and acidic residues). The span at 165–189 (SQSAEDIRTPTKSPQMQNKKTQTPE) shows a compositional bias: polar residues. Residues 279-292 (SLNSGMESSLSSNK) are compositionally biased toward low complexity. Residues 309-318 (EVSSCQTDCR) show a composition bias toward polar residues. Residues 319 to 330 (SSSQKESTQGSS) show a composition bias toward low complexity. The span at 338 to 350 (NFTTEGTQCSYNR) shows a compositional bias: polar residues. The span at 354–364 (EIDSIMEEEES) shows a compositional bias: acidic residues. 2 stretches are compositionally biased toward basic and acidic residues: residues 365 to 375 (IDRRKKDDLRI) and 394 to 408 (SRRE…DDSR). Low complexity predominate over residues 409 to 430 (LNSPNSSRLGSEVSSRVESSRS). 3 stretches are compositionally biased toward basic and acidic residues: residues 464 to 487 (KHNQ…EQHQ), 495 to 512 (PKGR…REQQ), and 519 to 538 (RDQR…EREQ). Low complexity-rich tracts occupy residues 594 to 605 (STGVTASTSTTS) and 657 to 669 (ESST…SSSS). The span at 678–696 (GSLQQVAATNTNQSNARSS) shows a compositional bias: polar residues. The segment covering 714-735 (AIGSSSPLPESVSYSGSTSGSG) has biased composition (low complexity). Composition is skewed to polar residues over residues 737 to 751 (VITQ…NAST) and 822 to 832 (TESATAAQIPS). Residues 893 to 907 (LPAPPPTQPPPPPPH) are compositionally biased toward pro residues. Over residues 1092–1107 (SAITRSTTTTTNSSSS) the composition is skewed to low complexity. Residues 1115 to 1322 (MSVPMGMMNT…ISLNHSMAIM (208 aa)) are interaction with Klp10A. The interval 1190–1309 (SLQDQLQLAR…FNKRLKSRVA (120 aa)) is ALMS motif.

It belongs to the ALMS1 family. As to quaternary structure, interacts (via C-terminus) with Klp10A. Interacts with SAK. As to expression, expressed in all germlines, including germline stem cells and spermatogonia.

It localises to the cytoplasm. It is found in the cytoskeleton. Its subcellular location is the microtubule organizing center. The protein localises to the centrosome. The protein resides in the centriole. Its function is as follows. In asymmetrically dividing germline stem cells (GSCs), plays a critical role in ensuring centrosome duplication, which is essential for the production of centrosomes and centrioles in all downstream germ cells. Might recruit SAK for daughter centriole duplication. This Drosophila melanogaster (Fruit fly) protein is Centrosome-associated protein Alms1a.